The following is a 259-amino-acid chain: Kallikrein 1-related peptidase b22 (259 aa).

An N-terminal signal peptide occupies residues 1-17 (MRFLILFLTLSLGGIDA). Residues 18-24 (APPVQSR) constitute a propeptide, activation peptide. A Peptidase S1 domain is found at 25 to 256 (ILGGFKCEKN…FTSWIKDTMA (232 aa)). Intrachain disulfides connect Cys31/Cys171, Cys50/Cys66, Cys150/Cys217, Cys182/Cys196, and Cys207/Cys232. Catalysis depends on His65, which acts as the Charge relay system. Residue Asn102 is glycosylated (N-linked (GlcNAc...) asparagine). The Charge relay system role is filled by Asp118. The active-site Charge relay system is Ser211.

Belongs to the peptidase S1 family. Kallikrein subfamily.

It catalyses the reaction Preferential cleavage of Arg-|-Xaa bonds in small molecule substrates. Highly selective action to release kallidin (lysyl-bradykinin) from kininogen involves hydrolysis of Met-|-Xaa or Leu-|-Xaa.. Glandular kallikreins cleave Met-Lys and Arg-Ser bonds in kininogen to release Lys-bradykinin. The chain is Kallikrein 1-related peptidase b22 (Klk1b22) from Mus musculus (Mouse).